The following is an 89-amino-acid chain: Class II hydrophobin 2 (89 aa).

The first 15 residues, 1–15 (MKLYIAAALLTLGLA), serve as a signal peptide directing secretion. Cystine bridges form between Cys34/Cys74, Cys45/Cys66, Cys46/Cys58, and Cys75/Cys86.

This sequence belongs to the cerato-ulmin hydrophobin family. Homodimer. Homodimers further self-assemble to form highly ordered films at water-air interfaces through intermolecular interactions.

The protein localises to the secreted. It is found in the cell wall. Its function is as follows. Aerial growth, conidiation, and dispersal of filamentous fungi in the environment rely upon a capability of their secreting small amphipathic proteins called hydrophobins (HPBs) with low sequence identity. Class I can self-assemble into an outermost layer of rodlet bundles on aerial cell surfaces, conferring cellular hydrophobicity that supports fungal growth, development and dispersal; whereas Class II form highly ordered films at water-air interfaces through intermolecular interactions but contribute nothing to the rodlet structure. This chain is Class II hydrophobin 2, found in Trichoderma asperellum (strain ATCC 204424 / CBS 433.97 / NBRC 101777).